The primary structure comprises 505 residues: Outer capsid protein VP5 (505 aa).

Residues 1 to 42 (MGKFTSFLKRAGSATKKALTSDAAKRMYKMAGKTLQKVVESE) form an involved in membrane permeabilization region.

The protein belongs to the orbivirus VP5 family.

Its subcellular location is the virion. Functionally, VP5 protein is one of the two proteins (with VP2) which constitute the virus particle outer capsid. Acts as a membrane permeabilization protein that mediates release of viral particles from endosomal compartments into the cytoplasm. Permeabilization activity is probably negatively regulated by VP2 and is triggered by endosomal degradation of VP2 and exposure to low pH. The polypeptide is Outer capsid protein VP5 (Segment-6) (African horse sickness virus 9 (AHSV-9)).